The primary structure comprises 644 residues: Putative aldehyde dehydrogenase-like protein YHR039C (644 aa).

Asn15 carries N-linked (GlcNAc...) asparagine glycosylation. Glu354 serves as the catalytic Proton acceptor. The Nucleophile role is filled by Cys389. 2 N-linked (GlcNAc...) asparagine glycosylation sites follow: Asn565 and Asn627.

This sequence belongs to the aldehyde dehydrogenase family. In terms of processing, N-glycosylated.

It localises to the endoplasmic reticulum. This Saccharomyces cerevisiae (strain ATCC 204508 / S288c) (Baker's yeast) protein is Putative aldehyde dehydrogenase-like protein YHR039C (MSC7).